Here is a 29-residue protein sequence, read N- to C-terminus: MDIVSIGWAALMVVFTFSLSLVVWGRSGL.

Residues 3–23 (IVSIGWAALMVVFTFSLSLVV) traverse the membrane as a helical segment.

It belongs to the PetN family. As to quaternary structure, the 4 large subunits of the cytochrome b6-f complex are cytochrome b6, subunit IV (17 kDa polypeptide, PetD), cytochrome f and the Rieske protein, while the 4 small subunits are PetG, PetL, PetM and PetN. The complex functions as a dimer.

Its subcellular location is the plastid. It is found in the chloroplast thylakoid membrane. Functionally, component of the cytochrome b6-f complex, which mediates electron transfer between photosystem II (PSII) and photosystem I (PSI), cyclic electron flow around PSI, and state transitions. This Zygnema circumcarinatum (Green alga) protein is Cytochrome b6-f complex subunit 8.